We begin with the raw amino-acid sequence, 256 residues long: Small ribosomal subunit protein eS1 (256 aa).

Ala2 carries the post-translational modification N-acetylalanine; partial.

The protein belongs to the eukaryotic ribosomal protein eS1 family. As to quaternary structure, component of the small ribosomal subunit. Mature ribosomes consist of a small (40S) and a large (60S) subunit. The 40S subunit contains about 33 different proteins and 1 molecule of RNA (18S). The 60S subunit contains about 49 different proteins and 3 molecules of RNA (25S, 5.8S and 5S).

It is found in the cytoplasm. This Lentinula edodes (Shiitake mushroom) protein is Small ribosomal subunit protein eS1.